The primary structure comprises 421 residues: UDP-N-acetylglucosamine 1-carboxyvinyltransferase (421 aa).

22 to 23 provides a ligand contact to phosphoenolpyruvate; the sequence is KN. Arg-93 serves as a coordination point for UDP-N-acetyl-alpha-D-glucosamine. Catalysis depends on Cys-117, which acts as the Proton donor. Cys-117 is subject to 2-(S-cysteinyl)pyruvic acid O-phosphothioketal. UDP-N-acetyl-alpha-D-glucosamine is bound by residues 122 to 126, Asp-308, and Val-330; that span reads RPVDL.

The protein belongs to the EPSP synthase family. MurA subfamily.

Its subcellular location is the cytoplasm. It carries out the reaction phosphoenolpyruvate + UDP-N-acetyl-alpha-D-glucosamine = UDP-N-acetyl-3-O-(1-carboxyvinyl)-alpha-D-glucosamine + phosphate. It participates in cell wall biogenesis; peptidoglycan biosynthesis. In terms of biological role, cell wall formation. Adds enolpyruvyl to UDP-N-acetylglucosamine. In Pseudomonas aeruginosa (strain LESB58), this protein is UDP-N-acetylglucosamine 1-carboxyvinyltransferase.